The chain runs to 518 residues: Calcium/calmodulin-dependent protein kinase kinase cmkC (518 aa).

The interval 1–72 (MANEGAGSLQ…SEYTLSQDDG (72 aa)) is disordered. 2 stretches are compositionally biased toward polar residues: residues 8–17 (SLQQDASPGS) and 60–71 (NARSEYTLSQDD). The Protein kinase domain maps to 81 to 376 (YVIKQEIGRG…MDELREHPWV (296 aa)). ATP-binding positions include 87 to 95 (IGRGSFGAV) and Lys-109. The interval 119-149 (RAKSQLLRQSRGPKRSSRWPKLPFSSPGTGT) is disordered. Catalysis depends on Asp-243, which acts as the Proton acceptor. The tract at residues 404–409 (FSAITK) is autoinhibitory domain. Positions 407-431 (ITKNFGHVLAVMKAAKKFKSLQGPT) are calmodulin-binding. The tract at residues 453 to 472 (PTQMDPEESVSLPSPLPYKK) is disordered.

The protein belongs to the protein kinase superfamily. Ser/Thr protein kinase family.

The catalysed reaction is L-seryl-[protein] + ATP = O-phospho-L-seryl-[protein] + ADP + H(+). It carries out the reaction L-threonyl-[protein] + ATP = O-phospho-L-threonyl-[protein] + ADP + H(+). Activated by Ca(2+)/calmodulin. Binding of calmodulin may relieve intrasteric autoinhibition. Calcium/calmodulin-dependent protein kinase that operates in the calcium-triggered CaMKK-CaMK1 signaling cascade. Phosphorylates and activates cmkB in vitro. Required in G1-phase of the cell cycle for proper timing of the initial nuclear division after germination as well as for subsequent nuclear division cycles. Required for the normal temporal regulation of nimX activity. The protein is Calcium/calmodulin-dependent protein kinase kinase cmkC of Emericella nidulans (Aspergillus nidulans).